Reading from the N-terminus, the 479-residue chain is Ammonium transporter 3 member 2 (479 aa).

The next 11 helical transmembrane spans lie at 34–54 (VAAT…YGGV), 59–79 (WAVN…ICWV), 139–159 (VVYF…GSLL), 164–184 (FLAW…VGAF), 202–222 (GGYV…YWVG), 237–257 (ILFT…FNGG), 272–292 (NTNI…VIFF), 297–317 (VVGA…AAGV), 321–341 (WAAL…MMIL), 355–375 (LGVF…TGLF), and 407–427 (IAGG…ICLA).

Belongs to the ammonia transporter channel (TC 1.A.11.2) family.

Its subcellular location is the membrane. Involved in ammonium transport. The sequence is that of Ammonium transporter 3 member 2 (AMT3-2) from Oryza sativa subsp. japonica (Rice).